The following is a 193-amino-acid chain: uncharacterized protein (193 aa).

Residues 119–143 (LAGSLLAATGMTLGIFGMGITGTCW) form a helical membrane-spanning segment.

The protein resides in the mitochondrion membrane. This is an uncharacterized protein from Saccharomyces cerevisiae (strain ATCC 204508 / S288c) (Baker's yeast).